A 104-amino-acid polypeptide reads, in one-letter code: Large ribosomal subunit protein uL24 (104 aa).

It belongs to the universal ribosomal protein uL24 family. In terms of assembly, part of the 50S ribosomal subunit.

One of two assembly initiator proteins, it binds directly to the 5'-end of the 23S rRNA, where it nucleates assembly of the 50S subunit. Its function is as follows. One of the proteins that surrounds the polypeptide exit tunnel on the outside of the subunit. This chain is Large ribosomal subunit protein uL24, found in Clostridium perfringens (strain SM101 / Type A).